The primary structure comprises 433 residues: ATP-dependent protease ATPase subunit HslU (433 aa).

Residues isoleucine 18, 60–65 (GVGKTE), aspartate 246, glutamate 311, and arginine 383 contribute to the ATP site.

Belongs to the ClpX chaperone family. HslU subfamily. As to quaternary structure, a double ring-shaped homohexamer of HslV is capped on each side by a ring-shaped HslU homohexamer. The assembly of the HslU/HslV complex is dependent on binding of ATP.

Its subcellular location is the cytoplasm. ATPase subunit of a proteasome-like degradation complex; this subunit has chaperone activity. The binding of ATP and its subsequent hydrolysis by HslU are essential for unfolding of protein substrates subsequently hydrolyzed by HslV. HslU recognizes the N-terminal part of its protein substrates and unfolds these before they are guided to HslV for hydrolysis. The sequence is that of ATP-dependent protease ATPase subunit HslU from Cereibacter sphaeroides (strain ATCC 17029 / ATH 2.4.9) (Rhodobacter sphaeroides).